Consider the following 127-residue polypeptide: Large ribosomal subunit protein bL20 (127 aa).

This sequence belongs to the bacterial ribosomal protein bL20 family.

In terms of biological role, binds directly to 23S ribosomal RNA and is necessary for the in vitro assembly process of the 50S ribosomal subunit. It is not involved in the protein synthesizing functions of that subunit. The polypeptide is Large ribosomal subunit protein bL20 (Corynebacterium urealyticum (strain ATCC 43042 / DSM 7109)).